The chain runs to 600 residues: Spastin (600 aa).

The segment at 1-39 is disordered; the sequence is MNSPGGRNDKKKPVTPAAETGPGSPTTPPSTETQVVLAP. Topologically, residues 1–53 are cytoplasmic; sequence MNSPGGRNDKKKPVTPAAETGPGSPTTPPSTETQVVLAPPSPHKRNLHLFSYP. A compositionally biased stretch (low complexity) spans 15–33; the sequence is TPAAETGPGSPTTPPSTET. An intramembrane region (helical) is located at residues 54 to 74; that stretch reads LLAVFSLLRFLAFQLGLLFVW. The Cytoplasmic segment spans residues 75 to 600; that stretch reads CCELLSRSVM…WNQDFGDTTV (526 aa). An MIT domain is found at 110–185; that stretch reads YHQQAFQYIS…IMAKDRLQLL (76 aa). A disordered region spans residues 213 to 294; it reads GLLKPEKGAV…KPATPTTAVR (82 aa). Basic and acidic residues predominate over residues 216-228; the sequence is KPEKGAVPKKKDP. A compositionally biased stretch (polar residues) spans 253-291; the sequence is PNCTSVPTSARQAGAHTPSNRGATGKNNTRTNKPATPTT. An ATP-binding site is contributed by 366-373; the sequence is GPPGNGKT.

The protein belongs to the AAA ATPase family. Spastin subfamily. In terms of assembly, homohexamer. The homohexamer is stabilized by ATP-binding. The homohexamer may adopt a ring conformation through which microtubules pass prior to being severed. Interacts with microtubules.

The protein resides in the membrane. Its subcellular location is the cytoplasm. The protein localises to the cytoskeleton. It localises to the microtubule organizing center. It is found in the centrosome. The protein resides in the perinuclear region. Its subcellular location is the nucleus. The catalysed reaction is n ATP + n H2O + a microtubule = n ADP + n phosphate + (n+1) alpha/beta tubulin heterodimers.. Functionally, ATP-dependent microtubule severing protein that specifically recognizes and cuts microtubules that are polyglutamylated. Preferentially recognizes and acts on microtubules decorated with short polyglutamate tails: severing activity increases as the number of glutamates per tubulin rises from one to eight, but decreases beyond this glutamylation threshold. Microtubule severing promotes reorganization of cellular microtubule arrays and the release of microtubules from the centrosome following nucleation. Required for membrane traffic from the endoplasmic reticulum (ER) to the Golgi and for completion of the abscission stage of cytokinesis. Also plays a role in axon growth and the formation of axonal branches. This Xenopus laevis (African clawed frog) protein is Spastin.